The sequence spans 411 residues: Translation initiation factor 2 subunit gamma (411 aa).

The region spanning 9-201 (QPTVNIGMVG…AIEKYIPTPE (193 aa)) is the tr-type G domain. The interval 18–25 (GHVDHGKS) is G1. Residues D21, S25, G46, and S48 each contribute to the Mg(2+) site. 21 to 26 (DHGKST) lines the GTP pocket. The segment at 46–50 (GISIK) is G2. The segment at 88 to 91 (DAPG) is G3. Residues 144-147 (NKID) and 179-181 (SAY) each bind GTP. The tract at residues 144-147 (NKID) is G4. The segment at 179–181 (SAY) is G5.

The protein belongs to the TRAFAC class translation factor GTPase superfamily. Classic translation factor GTPase family. EIF2G subfamily. As to quaternary structure, heterotrimer composed of an alpha, a beta and a gamma chain. Mg(2+) serves as cofactor.

The catalysed reaction is GTP + H2O = GDP + phosphate + H(+). EIF-2 functions in the early steps of protein synthesis by forming a ternary complex with GTP and initiator tRNA. The polypeptide is Translation initiation factor 2 subunit gamma (Thermoplasma volcanium (strain ATCC 51530 / DSM 4299 / JCM 9571 / NBRC 15438 / GSS1)).